Here is a 369-residue protein sequence, read N- to C-terminus: tRNA/tmRNA (uracil-C(5))-methyltransferase (369 aa).

5 residues coordinate S-adenosyl-L-methionine: Gln190, Tyr218, Asn223, Glu239, and Asp301. Cys326 serves as the catalytic Nucleophile. Glu360 functions as the Proton acceptor in the catalytic mechanism.

It belongs to the class I-like SAM-binding methyltransferase superfamily. RNA M5U methyltransferase family. TrmA subfamily.

The enzyme catalyses uridine(54) in tRNA + S-adenosyl-L-methionine = 5-methyluridine(54) in tRNA + S-adenosyl-L-homocysteine + H(+). It carries out the reaction uridine(341) in tmRNA + S-adenosyl-L-methionine = 5-methyluridine(341) in tmRNA + S-adenosyl-L-homocysteine + H(+). Dual-specificity methyltransferase that catalyzes the formation of 5-methyluridine at position 54 (m5U54) in all tRNAs, and that of position 341 (m5U341) in tmRNA (transfer-mRNA). This chain is tRNA/tmRNA (uracil-C(5))-methyltransferase, found in Vibrio parahaemolyticus serotype O3:K6 (strain RIMD 2210633).